A 233-amino-acid polypeptide reads, in one-letter code: Enolase-phosphatase E1 (233 aa).

Belongs to the HAD-like hydrolase superfamily. MasA/MtnC family. Monomer. Requires Mg(2+) as cofactor.

It carries out the reaction 5-methylsulfanyl-2,3-dioxopentyl phosphate + H2O = 1,2-dihydroxy-5-(methylsulfanyl)pent-1-en-3-one + phosphate. It functions in the pathway amino-acid biosynthesis; L-methionine biosynthesis via salvage pathway; L-methionine from S-methyl-5-thio-alpha-D-ribose 1-phosphate: step 3/6. Its pathway is amino-acid biosynthesis; L-methionine biosynthesis via salvage pathway; L-methionine from S-methyl-5-thio-alpha-D-ribose 1-phosphate: step 4/6. Bifunctional enzyme that catalyzes the enolization of 2,3-diketo-5-methylthiopentyl-1-phosphate (DK-MTP-1-P) into the intermediate 2-hydroxy-3-keto-5-methylthiopentenyl-1-phosphate (HK-MTPenyl-1-P), which is then dephosphorylated to form the acireductone 1,2-dihydroxy-3-keto-5-methylthiopentene (DHK-MTPene). The polypeptide is Enolase-phosphatase E1 (Hahella chejuensis (strain KCTC 2396)).